The following is a 237-amino-acid chain: uncharacterized protein (237 aa).

21 to 28 lines the ATP pocket; the sequence is GCDGSGKS.

The protein to E.coli YghR and YghT.

This is an uncharacterized protein from Escherichia coli (strain K12).